We begin with the raw amino-acid sequence, 311 residues long: Dehydrogenase/reductase SDR family member 7C (311 aa).

The first 18 residues, 1 to 18, serve as a signal peptide directing secretion; that stretch reads MGIMAVLMLPLLLLGVSG. 5 residues coordinate NAD(+): Ser-47, Leu-49, Tyr-191, Lys-195, and Ser-226. Tyr-191 serves as the catalytic Proton acceptor.

It belongs to the short-chain dehydrogenases/reductases (SDR) family. As to expression, expressed in skeletal muscle, cardiac muscle and skin.

The protein resides in the sarcoplasmic reticulum membrane. The catalysed reaction is all-trans-retinol + NAD(+) = all-trans-retinal + NADH + H(+). Its function is as follows. NADH-dependent oxidoreductase which catalyzes the oxidation of all-trans-retinol to all-trans-retinal. Plays a role in the regulation of cardiac and skeletal muscle metabolic functions. Maintains Ca(2+) intracellular homeostasis by repressing Ca(2+) release from the sarcoplasmic reticulum (SR) in myotubes, possibly through local alternations in NAD/NADH or retinol/retinal. Also plays a role in Ca(2+) homeostasis by controlling Ca(2+) overload in the cytosol and the SR in myotubes. Involved in glucose uptake into skeletal muscles and muscle performance by activating PI3K and mTORC2-mediated AKT1 phosphorylation signaling pathways, possibly through the action of its downstream catalytic product all-trans-retinoic acid. The polypeptide is Dehydrogenase/reductase SDR family member 7C (Rattus norvegicus (Rat)).